Reading from the N-terminus, the 334-residue chain is Adenosine deaminase (334 aa).

Residues H12 and H14 each coordinate Zn(2+). Substrate contacts are provided by H14, D16, and G170. Residue H197 coordinates Zn(2+). The active-site Proton donor is the E200. Position 278 (D278) interacts with Zn(2+). D279 contacts substrate.

This sequence belongs to the metallo-dependent hydrolases superfamily. Adenosine and AMP deaminases family. Adenosine deaminase subfamily. Zn(2+) is required as a cofactor.

The catalysed reaction is adenosine + H2O + H(+) = inosine + NH4(+). It catalyses the reaction 2'-deoxyadenosine + H2O + H(+) = 2'-deoxyinosine + NH4(+). Catalyzes the hydrolytic deamination of adenosine and 2-deoxyadenosine. This Vibrio parahaemolyticus serotype O3:K6 (strain RIMD 2210633) protein is Adenosine deaminase.